Here is a 233-residue protein sequence, read N- to C-terminus: AA9 family lytic polysaccharide monooxygenase A (233 aa).

An N-terminal signal peptide occupies residues 1-17 (MKLTTSVALLAAAGAQA). H18 and H90 together coordinate Cu(2+). 2 disulfides stabilise this stretch: C59-C180 and C150-C233. Residue N132 is glycosylated (N-linked (GlcNAc...) asparagine). O2 contacts are provided by H166 and Q175. Y177 provides a ligand contact to Cu(2+).

The protein belongs to the polysaccharide monooxygenase AA9 family. Cu(2+) serves as cofactor.

The protein resides in the secreted. The catalysed reaction is [(1-&gt;4)-beta-D-glucosyl]n+m + reduced acceptor + O2 = 4-dehydro-beta-D-glucosyl-[(1-&gt;4)-beta-D-glucosyl]n-1 + [(1-&gt;4)-beta-D-glucosyl]m + acceptor + H2O.. Functionally, lytic polysaccharide monooxygenase (LPMO) that depolymerizes crystalline and amorphous polysaccharides via the oxidation of scissile alpha- or beta-(1-4)-glycosidic bonds, yielding C1 and C4 oxidation products. Catalysis by LPMOs requires the reduction of the active-site copper from Cu(II) to Cu(I) by a reducing agent and H(2)O(2) or O(2) as a cosubstrate. Shows endoglucanase activity on tamarind xyloglucan, as well as on beechwood xylan when combined with phosphoric acid swollen cellulose (PASC). Shows no activity on wheat arabinoxylan, konjac glucomannan, acetylated spruce galactoglucomannan, or cellopentaose. The sequence is that of AA9 family lytic polysaccharide monooxygenase A from Thermothielavioides terrestris (strain ATCC 38088 / NRRL 8126) (Thielavia terrestris).